A 429-amino-acid polypeptide reads, in one-letter code: Chaperone SurA (429 aa).

A signal peptide spans 1 to 18; sequence MFKRIALVCALFSGICFA. 2 consecutive PpiC domains span residues 170–271 and 281–380; these read NLTY…KLVA and ITQT…EVIA.

It localises to the periplasm. It catalyses the reaction [protein]-peptidylproline (omega=180) = [protein]-peptidylproline (omega=0). Its function is as follows. Chaperone involved in the correct folding and assembly of outer membrane proteins. Recognizes specific patterns of aromatic residues and the orientation of their side chains, which are found more frequently in integral outer membrane proteins. May act in both early periplasmic and late outer membrane-associated steps of protein maturation. This chain is Chaperone SurA, found in Legionella pneumophila (strain Paris).